Here is a 572-residue protein sequence, read N- to C-terminus: Phosphoglucomutase-1 (572 aa).

Substrate is bound by residues T23, R27, 126–127 (SH), and K140. S126 (phosphoserine intermediate) is an active-site residue. S126 contributes to the Mg(2+) binding site. Positions 308, 310, and 312 each coordinate Mg(2+). Substrate is bound by residues 312–313 (DR), T373, 392–394 (EES), K405, and R527.

Belongs to the phosphohexose mutase family. It depends on Mg(2+) as a cofactor. Phosphorylated via a calcium-dependent protein kinase. Very rapidly (within 80 ms) dephosphorylated during triggered trichocyst exocytosis. In terms of processing, O-glycosylated with a short chain of mannose residues.

It is found in the cytoplasm. It carries out the reaction alpha-D-glucose 1-phosphate = alpha-D-glucose 6-phosphate. Its function is as follows. May be involved in membrane fusion in exocytosis. In Paramecium tetraurelia, this protein is Phosphoglucomutase-1 (pp63-1).